The following is a 180-amino-acid chain: NADH-quinone oxidoreductase subunit I (180 aa).

4Fe-4S ferredoxin-type domains follow at residues 50–80 and 90–119; these read LTRD…LQKA and EFFR…LTPD. Residues cysteine 60, cysteine 63, cysteine 66, cysteine 70, cysteine 99, cysteine 102, cysteine 105, and cysteine 109 each coordinate [4Fe-4S] cluster.

Belongs to the complex I 23 kDa subunit family. NDH-1 is composed of 14 different subunits. Subunits NuoA, H, J, K, L, M, N constitute the membrane sector of the complex. [4Fe-4S] cluster serves as cofactor.

Its subcellular location is the cell inner membrane. It catalyses the reaction a quinone + NADH + 5 H(+)(in) = a quinol + NAD(+) + 4 H(+)(out). NDH-1 shuttles electrons from NADH, via FMN and iron-sulfur (Fe-S) centers, to quinones in the respiratory chain. The immediate electron acceptor for the enzyme in this species is believed to be ubiquinone. Couples the redox reaction to proton translocation (for every two electrons transferred, four hydrogen ions are translocated across the cytoplasmic membrane), and thus conserves the redox energy in a proton gradient. This chain is NADH-quinone oxidoreductase subunit I, found in Acinetobacter baumannii (strain ACICU).